An 898-amino-acid polypeptide reads, in one-letter code: Nitrate reductase [NAD(P)H] (898 aa).

Residues 1–15 are compositionally biased toward basic and acidic residues; the sequence is MAASVENRRFTHHEP. A disordered region spans residues 1 to 65; the sequence is MAASVENRRF…SSSEDENEND (65 aa). Mo-molybdopterin is bound at residue Cys-180. Residues 528 to 603 enclose the Cytochrome b5 heme-binding domain; that stretch reads SKMFSMSEVK…LEDYRIGELI (76 aa). Residues His-563 and His-586 each contribute to the heme site. The FAD-binding FR-type domain maps to 642–754; the sequence is GAKIPTKLVY…KGPLGHVEYT (113 aa). Residues 694-697, 711-715, Phe-716, Phe-723, 728-730, and Thr-781 each bind FAD; these read RAYT, VVKIY, and LMS.

This sequence belongs to the nitrate reductase family. Homodimer. It depends on FAD as a cofactor. Requires heme as cofactor. The cofactor is Mo-molybdopterin.

The catalysed reaction is nitrite + NAD(+) + H2O = nitrate + NADH + H(+). It carries out the reaction nitrite + NADP(+) + H2O = nitrate + NADPH + H(+). Nitrate reductase is a key enzyme involved in the first step of nitrate assimilation in plants, fungi and bacteria. The chain is Nitrate reductase [NAD(P)H] (NIA1) from Betula pendula (European white birch).